We begin with the raw amino-acid sequence, 134 residues long: uncharacterized protein (134 aa).

This is an uncharacterized protein from Archaeoglobus fulgidus (strain ATCC 49558 / DSM 4304 / JCM 9628 / NBRC 100126 / VC-16).